The primary structure comprises 961 residues: MPVFHTKTIESILDPVAQQVSRLVILHEEAEDGNAMPDLSRPVQVVSAAVANLVKVGRDTINSSDDKILRQDMPSALHRVEGASQLLEEASDMLRSDPYSGPARKKLIEGSRGILQGTSSLLLCFDESEVRKIIQECKRVLDYLAVAEVINTMEQLVQFLKDLSPCLSKVHREVGAREKELTHQVHSEILVRCLEQVKTLAPILICSMKVYIHIVEQQGRGAEEAAENRNYLAARMSDELQEIIRVLQLTTYDEDTSELDNLTVLKKLSNAISNKMEQANEWLSNPYALRGGVGEKALRQVIDNATEISERCLPQDSYPIRKLADEVTAMANTLCELRQEGKGQSPQAESLVRGIRDRMGELKSLVHQAVLGVDKAGVQQTAHTIQGRLEQAVKWLQHPEINDGGLGERAINLIVEEGRKVAEGCPGHQKAEIQQLCDEVERLKRQAAGSGPAAKQAAKQLTQKLYELKAAIQNALVNRIVQDFMDVSTPLKQFTEAVLQPEGTPGREQNFNQKSNNLQAFSDRASKTSRMVAAGGACGNKKIAEILLSSAAQVDSLTPQLISAGRIRMNYPGSKAADEHLQNLKQQYADTVLRMRTLCDQATDPADFIKTSEEHMQVYAKLCEDAIHARQPQKMVDNTSNIARLINRVLLVAKQEADNSEDPVFTERLNAAANRLERSLPAMVGDAKLVATNIADPAAAAAWKNSFQRLLGDVREVRDAIAPPQPPPLPTSLPPPIPELSALHLSNQNAERAPPRPPLPREGLAPVRPPPPETDDEDEGVFRTMPHANQPILIAARGLHQEVRQWSSKDNEIIAAAKRMAILMARLSELVLSDSRGSKRELIATAKKIAEASEDVTRLAKELARQCTDRRIRTNLLQVCERIPTIGTQLKILSTVKATMLGAQGSDEDREATEMLVGNAQNLMQSVKETVRAAEGASIKIRSDQTSNRLQWVRRQPWYQY.

2 repeat units span residues 258 to 362 and 371 to 470. The 2 X repeats stretch occupies residues 258–470; that stretch reads ELDNLTVLKK…LTQKLYELKA (213 aa). The disordered stretch occupies residues 720 to 778; it reads AIAPPQPPPLPTSLPPPIPELSALHLSNQNAERAPPRPPLPREGLAPVRPPPPETDDED. The segment covering 723–738 has biased composition (pro residues); sequence PPQPPPLPTSLPPPIP. Thr774 carries the post-translational modification Phosphothreonine.

Belongs to the vinculin/alpha-catenin family. Exhibits self-association properties.

Its subcellular location is the cytoplasm. It localises to the cytoskeleton. It is found in the cell junction. The protein localises to the adherens junction. The protein resides in the cell membrane. Functionally, involved in cell adhesion. May be involved in the attachment of the actin-based microfilaments to the plasma membrane. In Drosophila melanogaster (Fruit fly), this protein is Vinculin (Vinc).